Consider the following 953-residue polypeptide: 26S proteasome non-ATPase regulatory subunit 1 (953 aa).

N-acetylmethionine is present on Met1. At Thr273 the chain carries Phosphothreonine. Residues 277–319 (SVPGSTNTGTVPGPEKDSDSMETEEKTAGAVAGKTPDASPEPK) form a disordered region. Residues 290–303 (PEKDSDSMETEEKT) show a composition bias toward basic and acidic residues. Lys310 is modified (N6-acetyllysine). Thr311 is subject to Phosphothreonine. Ser315 carries the phosphoserine modification. PC repeat units follow at residues 403 to 436 (TATA…PGSA), 441 to 474 (GGLY…DIVR), 476 to 510 (GGSL…VTGE), 511 to 545 (AAGL…EKIL), 547 to 580 (GLAV…ILRR), 581 to 616 (SGMY…DVRR), 617 to 649 (AAVE…PHVR), 651 to 685 (GAAM…YVRQ), 686 to 726 (GALI…DVMA), and 729 to 761 (GAIL…PSVV). Residue Lys720 is modified to N6-acetyllysine. Residue Thr830 is modified to Phosphothreonine. A Phosphoserine modification is found at Ser834. Disordered regions lie at residues 839–881 (AKKK…LDNP) and 930–953 (AHGP…YIDD). Basic and acidic residues-rich tracts occupy residues 842 to 852 (KEKEKEKKEEE) and 859 to 872 (AEKK…KEPE). The segment covering 936–953 (EEEEQEPEPPEPFEYIDD) has biased composition (acidic residues).

Belongs to the proteasome subunit S1 family. As to quaternary structure, component of the 19S proteasome regulatory particle complex. The 26S proteasome consists of a 20S core particle (CP) and two 19S regulatory subunits (RP). The regulatory particle is made of a lid composed of 9 subunits, a base containing 6 ATPases and few additional components including PSMD1. Interacts with ADRM1. Interacts with ZFAND1.

In terms of biological role, component of the 26S proteasome, a multiprotein complex involved in the ATP-dependent degradation of ubiquitinated proteins. This complex plays a key role in the maintenance of protein homeostasis by removing misfolded or damaged proteins, which could impair cellular functions, and by removing proteins whose functions are no longer required. Therefore, the proteasome participates in numerous cellular processes, including cell cycle progression, apoptosis, or DNA damage repair. This Rattus norvegicus (Rat) protein is 26S proteasome non-ATPase regulatory subunit 1 (Psmd1).